The primary structure comprises 245 residues: tRNA pseudouridine synthase A (245 aa).

Asp-52 serves as the catalytic Nucleophile. Tyr-111 is a substrate binding site.

The protein belongs to the tRNA pseudouridine synthase TruA family. In terms of assembly, homodimer.

It catalyses the reaction uridine(38/39/40) in tRNA = pseudouridine(38/39/40) in tRNA. Its function is as follows. Formation of pseudouridine at positions 38, 39 and 40 in the anticodon stem and loop of transfer RNAs. This is tRNA pseudouridine synthase A from Rickettsia prowazekii (strain Madrid E).